Here is a 117-residue protein sequence, read N- to C-terminus: Large ribosomal subunit protein bL20 (117 aa).

This sequence belongs to the bacterial ribosomal protein bL20 family.

Binds directly to 23S ribosomal RNA and is necessary for the in vitro assembly process of the 50S ribosomal subunit. It is not involved in the protein synthesizing functions of that subunit. The sequence is that of Large ribosomal subunit protein bL20 from Rickettsia felis (strain ATCC VR-1525 / URRWXCal2) (Rickettsia azadi).